The chain runs to 196 residues: Putative acetyltransferase YJL218W (196 aa).

Residue asparagine 84 coordinates acetyl-CoA. Histidine 114 acts as the Proton donor/acceptor in catalysis. Acetyl-CoA is bound by residues glycine 141, alanine 159, 164–165 (IR), lysine 179, and arginine 182.

This sequence belongs to the transferase hexapeptide repeat family. Homodimer.

The chain is Putative acetyltransferase YJL218W from Saccharomyces cerevisiae (strain ATCC 204508 / S288c) (Baker's yeast).